The sequence spans 344 residues: Follistatin (344 aa).

The N-terminal stretch at 1–29 (MVCARHQPGGLCLLLLLLCQFMEDRSAQA) is a signal peptide. The TB domain maps to 30–103 (GNCWLRQAKN…TCENVDCGPG (74 aa)). Intrachain disulfides connect Cys-32–Cys-55, Cys-42–Cys-88, Cys-56–Cys-91, Cys-95–Cys-106, Cys-100–Cys-116, Cys-118–Cys-150, Cys-122–Cys-143, Cys-132–Cys-164, Cys-168–Cys-179, Cys-173–Cys-189, Cys-192–Cys-225, Cys-196–Cys-218, Cys-207–Cys-239, Cys-245–Cys-256, Cys-250–Cys-267, Cys-270–Cys-302, Cys-274–Cys-295, and Cys-284–Cys-316. One can recognise a Follistatin-like 1 domain in the interval 94–117 (TCENVDCGPGKKCRMNKKNKPRCV). The Kazal-like 1 domain maps to 112 to 166 (NKPRCVCAPDCSNITWKGPVCGLDGKTYRNECALLKARCKEQPELEVQYQGKCKK). Asn-124 is a glycosylation site (N-linked (GlcNAc...) asparagine). Residues 167–190 (TCRDVFCPGSSTCVVDQTNNAYCV) form the Follistatin-like 2 domain. The Kazal-like 2 domain occupies 186 to 241 (NAYCVTCNRICPEPSSSEQSLCGNDGVTYSSACHLRKATCLLGRSIGLAYEGKCIK). Positions 244 to 268 (SCEDIQCGGGKKCLWDFKVGRGRCS) constitute a Follistatin-like 3 domain. The region spanning 264–318 (RGRCSLCDELCPDSKSDEPVCASDNATYASECAMKEAACSSGVLLEVKHSGSCNS) is the Kazal-like 3 domain. N-linked (GlcNAc...) asparagine glycosylation is present at Asn-288. Positions 315–344 (SCNSISEETEEEEEEEDQDYSFPISSTLEW) are disordered. Positions 321–333 (EETEEEEEEEDQD) are enriched in acidic residues.

As to quaternary structure, interacts with GDF11. Interacts with activin A/INHBA. Interacts with myostatin/MSTN.

The protein resides in the secreted. It localises to the nucleus. Its subcellular location is the nucleolus. Multifunctional regulatory protein whose primary function is to antagonize members of the transforming growth factor beta (TGF-beta) superfamily including activin, myostatin, GDF11 or bone morphogenetic proteins (BMPs). Mechanistically, binds to these ligands in the extracellular space, blocking their type II receptor-binding site to inhibit downstream signaling. Plays an essential role in muscle fiber formation and growth both by preventing the repressive effects of myostatin and through SMAD3/AKT/mTOR signaling independently of myostatin. Also promotes neural differentiation by antagonizing the action BMP4. Acts as a specific inhibitor of the biosynthesis and secretion of pituitary follicle stimulating hormone (FSH) by sequestering activin A/INHBA. On the other hand, translocates into the nucleus where it down-regulates rRNA synthesis and ribosome biogenesis to maintain cellular energy homeostasis by binding to rDNA. This is Follistatin from Rattus norvegicus (Rat).